Consider the following 214-residue polypeptide: Adenylate kinase (214 aa).

Residue 10–15 (GAGKGT) coordinates ATP. An NMP region spans residues 30-59 (STGDMLRAAVKAGTPLGLEAKKVMDAGQLV). AMP is bound by residues threonine 31, arginine 36, 57–59 (QLV), 85–88 (GFPR), and glutamine 92. Residues 122–159 (GRRVHPGSGRVYHIVFNQPKVEGKDDVTGEDLAIRPDD) form an LID region. Residues arginine 123 and 132 to 133 (VY) each bind ATP. Residues arginine 156 and arginine 167 each contribute to the AMP site. Glutamine 200 is an ATP binding site.

This sequence belongs to the adenylate kinase family. Monomer.

It localises to the cytoplasm. It catalyses the reaction AMP + ATP = 2 ADP. Its pathway is purine metabolism; AMP biosynthesis via salvage pathway; AMP from ADP: step 1/1. In terms of biological role, catalyzes the reversible transfer of the terminal phosphate group between ATP and AMP. Plays an important role in cellular energy homeostasis and in adenine nucleotide metabolism. The polypeptide is Adenylate kinase (Shewanella halifaxensis (strain HAW-EB4)).